A 182-amino-acid polypeptide reads, in one-letter code: tRNA-splicing endonuclease (182 aa).

Active-site residues include Tyr119, His127, and Lys158.

Belongs to the tRNA-intron endonuclease family. Archaeal short subfamily. As to quaternary structure, homotetramer; although the tetramer contains four active sites, only two participate in the cleavage. Therefore, it should be considered as a dimer of dimers.

The enzyme catalyses pretRNA = a 3'-half-tRNA molecule with a 5'-OH end + a 5'-half-tRNA molecule with a 2',3'-cyclic phosphate end + an intron with a 2',3'-cyclic phosphate and a 5'-hydroxyl terminus.. In terms of biological role, endonuclease that removes tRNA introns. Cleaves pre-tRNA at the 5'- and 3'-splice sites to release the intron. The products are an intron and two tRNA half-molecules bearing 2',3' cyclic phosphate and 5'-OH termini. Recognizes a pseudosymmetric substrate in which 2 bulged loops of 3 bases are separated by a stem of 4 bp. The polypeptide is tRNA-splicing endonuclease (Saccharolobus islandicus (strain Y.N.15.51 / Yellowstone #2) (Sulfolobus islandicus)).